A 279-amino-acid polypeptide reads, in one-letter code: Acetyl-coenzyme A carboxylase carboxyl transferase subunit beta (279 aa).

The 257-residue stretch at 23–279 (LWWKCEECGA…IVRLAGMLKV (257 aa)) folds into the CoA carboxyltransferase N-terminal domain. The Zn(2+) site is built by Cys27, Cys30, Cys46, and Cys49. A C4-type zinc finger spans residues 27-49 (CEECGAMIHKKQLEDHVYTCSDC).

It belongs to the AccD/PCCB family. As to quaternary structure, acetyl-CoA carboxylase is a heterohexamer composed of biotin carboxyl carrier protein (AccB), biotin carboxylase (AccC) and two subunits each of ACCase subunit alpha (AccA) and ACCase subunit beta (AccD). Requires Zn(2+) as cofactor.

It is found in the cytoplasm. It catalyses the reaction N(6)-carboxybiotinyl-L-lysyl-[protein] + acetyl-CoA = N(6)-biotinyl-L-lysyl-[protein] + malonyl-CoA. The protein operates within lipid metabolism; malonyl-CoA biosynthesis; malonyl-CoA from acetyl-CoA: step 1/1. Component of the acetyl coenzyme A carboxylase (ACC) complex. Biotin carboxylase (BC) catalyzes the carboxylation of biotin on its carrier protein (BCCP) and then the CO(2) group is transferred by the transcarboxylase to acetyl-CoA to form malonyl-CoA. This Chlorobium limicola (strain DSM 245 / NBRC 103803 / 6330) protein is Acetyl-coenzyme A carboxylase carboxyl transferase subunit beta.